A 108-amino-acid chain; its full sequence is Mitochondrial pyruvate carrier 4 (108 aa).

3 helical membrane passes run 19–35, 51–67, and 74–90; these read IHFWAPTFKWGISIANI, IAVTCTGVIWSRYSMVI, and LFSVNVAMAGTGIYQLA.

Belongs to the mitochondrial pyruvate carrier (MPC) (TC 2.A.105) family.

The protein resides in the mitochondrion inner membrane. Its function is as follows. Mediates the uptake of pyruvate into mitochondria. The protein is Mitochondrial pyruvate carrier 4 of Arabidopsis thaliana (Mouse-ear cress).